The sequence spans 401 residues: NADH-quinone oxidoreductase subunit D (401 aa).

It belongs to the complex I 49 kDa subunit family. In terms of assembly, NDH-1 is composed of 14 different subunits. Subunits NuoB, C, D, E, F, and G constitute the peripheral sector of the complex.

It localises to the cell inner membrane. It catalyses the reaction a quinone + NADH + 5 H(+)(in) = a quinol + NAD(+) + 4 H(+)(out). In terms of biological role, NDH-1 shuttles electrons from NADH, via FMN and iron-sulfur (Fe-S) centers, to quinones in the respiratory chain. The immediate electron acceptor for the enzyme in this species is believed to be ubiquinone. Couples the redox reaction to proton translocation (for every two electrons transferred, four hydrogen ions are translocated across the cytoplasmic membrane), and thus conserves the redox energy in a proton gradient. The sequence is that of NADH-quinone oxidoreductase subunit D from Rhodopseudomonas palustris (strain HaA2).